An 862-amino-acid polypeptide reads, in one-letter code: Molybdenum cofactor sulfurase (862 aa).

At serine 34 the chain carries Phosphoserine. Residue lysine 264 is modified to N6-(pyridoxal phosphate)lysine. Cysteine 424 is an active-site residue. At serine 517 the chain carries Phosphoserine. One can recognise an MOSC domain in the interval 704 to 855 (RKTPKKGQPP…LSVGSEVLPV (152 aa)).

The protein belongs to the class-V pyridoxal-phosphate-dependent aminotransferase family. MOCOS subfamily. Pyridoxal 5'-phosphate serves as cofactor.

The catalysed reaction is Mo-molybdopterin + L-cysteine + AH2 = thio-Mo-molybdopterin + L-alanine + A + H2O. The protein operates within cofactor biosynthesis; molybdopterin biosynthesis. In terms of biological role, sulfurates the molybdenum cofactor. Sulfation of molybdenum is essential for xanthine dehydrogenase (XDH) and aldehyde oxidase (ADO) enzymes in which molybdenum cofactor is liganded by 1 oxygen and 1 sulfur atom in active form. The sequence is that of Molybdenum cofactor sulfurase (Mocos) from Mus musculus (Mouse).